Consider the following 206-residue polypeptide: Sec-independent protein translocase protein TatB (206 aa).

The chain crosses the membrane as a helical span at residues M1–G21. The segment at E104–A206 is disordered. Residues P110–P124 show a composition bias toward low complexity. The segment covering E125 to E138 has biased composition (pro residues). 2 stretches are compositionally biased toward low complexity: residues P139 to P151 and A187 to P196.

This sequence belongs to the TatB family. The Tat system comprises two distinct complexes: a TatABC complex, containing multiple copies of TatA, TatB and TatC subunits, and a separate TatA complex, containing only TatA subunits. Substrates initially bind to the TatABC complex, which probably triggers association of the separate TatA complex to form the active translocon.

The protein localises to the cell inner membrane. Part of the twin-arginine translocation (Tat) system that transports large folded proteins containing a characteristic twin-arginine motif in their signal peptide across membranes. Together with TatC, TatB is part of a receptor directly interacting with Tat signal peptides. TatB may form an oligomeric binding site that transiently accommodates folded Tat precursor proteins before their translocation. This is Sec-independent protein translocase protein TatB from Rhizobium etli (strain ATCC 51251 / DSM 11541 / JCM 21823 / NBRC 15573 / CFN 42).